Consider the following 574-residue polypeptide: MATTAMRMIISIIFISTYVTHITLCQNITEEFYQSTCSAVSRGYLSALRTGWYTSVVTIELSKIQKNVCNSTDSNVKLIKQELERYNNAVVELQSLMQNEPASSSRAKRGIPELIHYKRNSTKKFYGLMGKKRKRRFLGFLLGIGSAIASGVAVSKVLHLEGEVNKIKNALLSTNKAVVSLSNGVSVLTSKVLDLKNYIDKELLPKVNNHDCKISNIATVIEFQQKNNRLLEIAREFSVNAGITTPLSTYMLTNSELLSLINDMPITNDQKKLMSSNVQIVRQQSYSIMSVVKEEVMAYVVQLPIYGVIDTPCWKLHTSPLCTTDNKEGSNICLTRTDRGWYCDNAGSVSFFPQAETCKVQSNRVFCDTMNSLTLPTDVNLCNTDIFNAKYDCKIMTSKTDISSSVITSIGAIVSCYGKTKCTASNKNRGIIKTFSNGCDYVSNRGVDTVSVGNTLYYVNKLEGKALYIKGEPIINYYDPLVFPSDEFDASIAQVNAKINQSLAFIRRSDELLHSVDVGKSTTNVVITTIIIVIVVVILMLIAVGLLFYSKTRSTPIMLGKDQLSGINNLSFSK.

A signal peptide spans 1-25 (MATTAMRMIISIIFISTYVTHITLC). Topologically, residues 26 to 524 (QNITEEFYQS…SVDVGKSTTN (499 aa)) are extracellular. Asn27 and Asn70 each carry an N-linked (GlcNAc...) asparagine; by host glycan. Intrachain disulfides connect Cys37-Cys439, Cys69-Cys212, Cys313-Cys343, Cys322-Cys333, Cys358-Cys367, Cys382-Cys393, and Cys416-Cys422. A coiled-coil region spans residues 76–96 (VKLIKQELERYNNAVVELQSL). Asn120 carries N-linked (GlcNAc...) asparagine; by host glycosylation. A fusion peptide region spans residues 137 to 157 (FLGFLLGIGSAIASGVAVSKV). Residues 158 to 209 (LHLEGEVNKIKNALLSTNKAVVSLSNGVSVLTSKVLDLKNYIDKELLPKVNN) adopt a coiled-coil conformation. Positions 481–516 (LVFPSDEFDASIAQVNAKINQSLAFIRRSDELLHSV) form a coiled coil. A glycan (N-linked (GlcNAc...) asparagine; by host) is linked at Asn500. The chain crosses the membrane as a helical span at residues 525–550 (VVITTIIIVIVVVILMLIAVGLLFYS). The Cytoplasmic segment spans residues 551–574 (KTRSTPIMLGKDQLSGINNLSFSK).

Belongs to the paramyxoviruses fusion glycoprotein family. In terms of assembly, homotrimer. Heterodimer with fusion protein F2; disulfide-linked. Part of a complex composed of F1, F2 and G glycoproteins. As a heterodimer with F2, interacts with host RHOA; this interaction facilitates virus-induced syncytium formation. Homotrimer. Heterodimer with fusion protein F1; disulfide-linked. Part of a complex composed of F1, F2 and G glycoproteins. As a heterodimer with F1, interacts with host RHOA; this interaction facilitates virus-induced syncytium formation. In terms of processing, the F glycoprotein is synthesized as a F0 inactive precursor that is heavily N-glycosylated and processed at two sites by a host furin-like protease probably in the Golgi. The cleavage site between p27 and F1 may occur after endocytosis to yield the mature F1 and F2 proteins. Both cleavages are required for membrane fusion and p27 is released from the processed protein.

It is found in the host Golgi apparatus membrane. The protein resides in the virion membrane. Its subcellular location is the host cell membrane. Functionally, inactive precursor that is cleaved at two sites by a furin-like protease to give rise to the mature F1 and F2 fusion glycoproteins. Its function is as follows. Class I viral fusion protein. Under the current model, the protein has at least 3 conformational states: pre-fusion native state, pre-hairpin intermediate state, and post-fusion hairpin state. During viral and plasma cell membrane fusion, the coiled coil regions assume a trimer-of-hairpins structure, positioning the fusion peptide in close proximity to the C-terminal region of the ectodomain. The formation of this structure appears to drive apposition and subsequent fusion of viral and cellular membranes leading to delivery of the nucleocapsid into the cytoplasm. This fusion is pH independent and occurs at the plasma or endosomal membrane. The trimer of F1-F2 (F protein) also facilitates the attachment and entry into the host cell. Later in infection, F protein expressed at the plasma membrane of infected cells can mediate fusion with adjacent cells to form syncytia, a cytopathic effect that could lead to tissue necrosis. Major determinant of the species specificity of RSV infection. The trimer of F1-F2 (F protein) also facilitates the attachment and entry into the host cell. Later in infection, F protein expressed at the plasma membrane of infected cells can mediate fusion with adjacent cells to form syncytia, a cytopathic effect that could lead to tissue necrosis. The polypeptide is Fusion glycoprotein F0 (F) (Bos taurus (Bovine)).